We begin with the raw amino-acid sequence, 161 residues long: Large ribosomal subunit protein uL11 (161 aa).

It belongs to the universal ribosomal protein uL11 family. Part of the ribosomal stalk of the 50S ribosomal subunit. Interacts with L10 and the large rRNA to form the base of the stalk. L10 forms an elongated spine to which L12 dimers bind in a sequential fashion forming a multimeric L10(L12)X complex.

Its function is as follows. Forms part of the ribosomal stalk which helps the ribosome interact with GTP-bound translation factors. The polypeptide is Large ribosomal subunit protein uL11 (Methanosarcina acetivorans (strain ATCC 35395 / DSM 2834 / JCM 12185 / C2A)).